Reading from the N-terminus, the 1352-residue chain is Astrotactin-2 (1352 aa).

The interval 1–31 is disordered; sequence MAAAGARRSPGRGLGLRGRPRLGFHPGPPPP. The N-terminal stretch at 1 to 51 is a signal peptide; the sequence is MAAAGARRSPGRGLGLRGRPRLGFHPGPPPPPPPPLLLLFLLLLPPPPLLA. The Lumenal portion of the chain corresponds to 52 to 218; the sequence is GATAAAASRE…IVEEQMHILH (167 aa). N180 is a glycosylation site (N-linked (GlcNAc...) asparagine). The helical transmembrane segment at 219–239 threads the bilayer; that stretch reads ISVMGGLIALLLLLLVFTVAL. The Cytoplasmic portion of the chain corresponds to 240 to 447; sequence YAQRRWQKRR…KGLLKSPVNK (208 aa). Disordered stretches follow at residues 308–327 and 375–421; these read EEEE…DEFG and TPVE…ADDE. The segment covering 383 to 392 has biased composition (polar residues); that stretch reads QPASRSSTSA. A helical membrane pass occupies residues 448–468; it reads TALTLIAVSSCILAMVCGNQM. At 469–1352 the chain is on the lumenal side; sequence SCPLTVKVTL…RNTYGETKGR (884 aa). EGF-like domains follow at residues 523–563, 664–708, and 712–764; these read VRDL…HLCV, PVRD…SGCY, and KGID…KSCL. Cystine bridges form between C527-C539, C535-C546, C548-C562, C668-C681, C675-C692, C694-C707, C716-C728, C724-C748, and C750-C763. N796 is a glycosylation site (N-linked (GlcNAc...) asparagine). 3 disulfides stabilise this stretch: C838-C1000, C929-C990, and C996-C1003. The N-linked (GlcNAc...) asparagine glycan is linked to N1033. Disulfide bonds link C1049/C1060, C1062/C1075, C1149/C1171, C1203/C1290, and C1311/C1334. A Fibronectin type-III domain is found at 1079 to 1201; the sequence is PQPVLRLSPT…SELSTVTLRT (123 aa).

It belongs to the astrotactin family. Interacts with ASTN1; the interaction is not calcium-dependent. In terms of tissue distribution, detected in cerebellum granule neurons; not detected in astroglia (at protein level). Detected primarily in cerebellum, and at lower levels in brain cortex, olfactory bulb, hindbrain and hippocampus dentate gyrus. Between 6 and 10 days after birth, when granule cell migration occurs in the cerebellum, detected in granule cell precursors in the external germinal layer, the molecular layer, the internal granule layer and in Purkinje neurons. Detected in postmitotic neurons in adult cerebellum.

It localises to the membrane. It is found in the perikaryon. The protein localises to the cytoplasm. Its subcellular location is the cell cortex. The protein resides in the early endosome. It localises to the late endosome. It is found in the cytoplasmic vesicle. The protein localises to the clathrin-coated vesicle. Mediates recycling of the neuronal cell adhesion molecule ASTN1 to the anterior pole of the cell membrane in migrating neurons. Promotes ASTN1 internalization and intracellular transport of endocytosed ASTN1. Selectively binds inositol-4,5-bisphosphate, inositol-3,4,5-trisphosphate and inositol-1,3,4,5-tetrakisphosphate, suggesting it is recruited to membranes that contain lipids with a phosphoinositide headgroup. The sequence is that of Astrotactin-2 (Astn2) from Mus musculus (Mouse).